The sequence spans 172 residues: uncharacterized protein (172 aa).

This sequence belongs to the flavoredoxin family. FMN serves as cofactor.

This is an uncharacterized protein from Pyrococcus horikoshii (strain ATCC 700860 / DSM 12428 / JCM 9974 / NBRC 100139 / OT-3).